Reading from the N-terminus, the 549-residue chain is Eukaryotic translation initiation factor 3 subunit D-2 (549 aa).

Residues 107–157 (ARVKGRSGRGPGMLGVAGSMAGGGTTSGSTKYGKGRESRRNQGRRFARNAP) are disordered. A compositionally biased stretch (gly residues) spans 114–132 (GRGPGMLGVAGSMAGGGTT). Residues 288–302 (QFDLLTVNETSLEPP) are RNA gate. The disordered stretch occupies residues 527-549 (NSFDSDAEDEENSSEPFANSLDN). Over residues 529–539 (FDSDAEDEENS) the composition is skewed to acidic residues.

Belongs to the eIF-3 subunit D family. In terms of assembly, component of the eukaryotic translation initiation factor 3 (eIF-3) complex. The eIF-3 complex interacts with pix.

The protein resides in the cytoplasm. Functionally, mRNA cap-binding component of the eukaryotic translation initiation factor 3 (eIF-3) complex, which is involved in protein synthesis of a specialized repertoire of mRNAs and, together with other initiation factors, stimulates binding of mRNA and methionyl-tRNAi to the 40S ribosome. The eIF-3 complex specifically targets and initiates translation of a subset of mRNAs involved in cell proliferation. In the eIF-3 complex, eif3d specifically recognizes and binds the 7-methylguanosine cap of a subset of mRNAs. The sequence is that of Eukaryotic translation initiation factor 3 subunit D-2 from Drosophila ananassae (Fruit fly).